We begin with the raw amino-acid sequence, 181 residues long: Ribosome maturation factor RimM (181 aa).

A PRC barrel domain is found at 98–177 (EGEFFYCDLV…KITTHNAKTL (80 aa)).

This sequence belongs to the RimM family. As to quaternary structure, binds ribosomal protein uS19.

The protein resides in the cytoplasm. An accessory protein needed during the final step in the assembly of 30S ribosomal subunit, possibly for assembly of the head region. Essential for efficient processing of 16S rRNA. May be needed both before and after RbfA during the maturation of 16S rRNA. It has affinity for free ribosomal 30S subunits but not for 70S ribosomes. The sequence is that of Ribosome maturation factor RimM from Helicobacter pylori (strain HPAG1).